We begin with the raw amino-acid sequence, 299 residues long: Very long chain fatty acid elongase 5 (299 aa).

An N-acetylmethionine modification is found at Met1. A run of 7 helical transmembrane segments spans residues 26 to 46 (WFLLDNYIPTFICSVIYLLIV), 64 to 84 (ILVVYNLGLTLLSLYMFCELV), 112 to 132 (VLWWYYFSKLIEFMDTFFFIL), 139 to 158 (ITVLHVYHHASMLNIWWFVM), 168 to 187 (FGATLNSFIHVLMYSYYGLS), 205 to 225 (GQLLQFVLTIIQTSCGVIWPC), and 226 to 246 (TFPLGWLYFQIGYMISLIALF). The segment at 274 to 299 (MAAVNGHTNSFSPLENNVKPRKLRKD) is disordered. The segment covering 279–288 (GHTNSFSPLE) has biased composition (polar residues). Ser285 carries the phosphoserine modification.

The protein belongs to the ELO family. ELOVL5 subfamily. In terms of assembly, interacts with TECR. In terms of tissue distribution, ubiquitous. Highly expressed in the adrenal gland and testis. Weakly expressed in prostate, lung and brain. Expressed in the cerebellum.

It localises to the endoplasmic reticulum membrane. The protein localises to the cell projection. It is found in the dendrite. The enzyme catalyses a very-long-chain acyl-CoA + malonyl-CoA + H(+) = a very-long-chain 3-oxoacyl-CoA + CO2 + CoA. The catalysed reaction is (6Z,9Z,12Z)-octadecatrienoyl-CoA + malonyl-CoA + H(+) = (8Z,11Z,14Z)-3-oxoeicosatrienoyl-CoA + CO2 + CoA. It carries out the reaction (9Z,12Z,15Z)-octadecatrienoyl-CoA + malonyl-CoA + H(+) = (11Z,14Z,17Z)-3-oxoeicosatrienoyl-CoA + CO2 + CoA. It catalyses the reaction (9Z)-hexadecenoyl-CoA + malonyl-CoA + H(+) = 3-oxo-(11Z)-octadecenoyl-CoA + CO2 + CoA. The enzyme catalyses (9Z)-octadecenoyl-CoA + malonyl-CoA + H(+) = 3-oxo-(11Z)-eicosenoyl-CoA + CO2 + CoA. The catalysed reaction is (11Z)-octadecenoyl-CoA + malonyl-CoA + H(+) = 3-oxo-(13Z)-eicosenoyl-CoA + CO2 + CoA. It carries out the reaction (9Z,12Z)-octadecadienoyl-CoA + malonyl-CoA + H(+) = (11Z,14Z)-3-oxoicosa-11,14-dienoyl-CoA + CO2 + CoA. It catalyses the reaction (6Z,9Z,12Z,15Z)-octadecatetraenoyl-CoA + malonyl-CoA + H(+) = (8Z,11Z,14Z,17Z)-3-oxoicosatetraenoyl-CoA + CO2 + CoA. The enzyme catalyses (5Z,8Z,11Z,14Z)-eicosatetraenoyl-CoA + malonyl-CoA + H(+) = (7Z,10Z,13Z,16Z)-3-oxodocosatetraenoyl-CoA + CO2 + CoA. The catalysed reaction is (5Z,8Z,11Z,14Z,17Z)-eicosapentaenoyl-CoA + malonyl-CoA + H(+) = 3-oxo-(7Z,10Z,13Z,16Z,19Z)-docosapentaenoyl-CoA + CO2 + CoA. The protein operates within lipid metabolism; polyunsaturated fatty acid biosynthesis. Catalyzes the first and rate-limiting reaction of the four reactions that constitute the long-chain fatty acids elongation cycle. This endoplasmic reticulum-bound enzymatic process allows the addition of 2 carbons to the chain of long- and very long-chain fatty acids (VLCFAs) per cycle. Condensing enzyme that acts specifically toward polyunsaturated acyl-CoA with the higher activity toward C18:3(n-6) acyl-CoA. May participate in the production of monounsaturated and of polyunsaturated VLCFAs of different chain lengths that are involved in multiple biological processes as precursors of membrane lipids and lipid mediators. In conditions where the essential linoleic and alpha linoleic fatty acids are lacking it is also involved in the synthesis of Mead acid from oleic acid. This Homo sapiens (Human) protein is Very long chain fatty acid elongase 5.